The following is a 59-amino-acid chain: Antitoxin RelB4 (59 aa).

The disordered stretch occupies residues 38 to 59; that stretch reads VGEWLKTLGTPHQTPPPYSWRK. Residues 50–59 are compositionally biased toward pro residues; the sequence is QTPPPYSWRK.

Functionally, antitoxin component of a type II toxin-antitoxin (TA) system. Neutralizes the effect of cognate toxin RelE4, but no other RelE or ParE toxin. This Caulobacter vibrioides (strain ATCC 19089 / CIP 103742 / CB 15) (Caulobacter crescentus) protein is Antitoxin RelB4 (relB4).